The sequence spans 172 residues: Adenine phosphoribosyltransferase (172 aa).

The protein belongs to the purine/pyrimidine phosphoribosyltransferase family. In terms of assembly, homodimer.

The protein localises to the cytoplasm. It catalyses the reaction AMP + diphosphate = 5-phospho-alpha-D-ribose 1-diphosphate + adenine. It functions in the pathway purine metabolism; AMP biosynthesis via salvage pathway; AMP from adenine: step 1/1. Functionally, catalyzes a salvage reaction resulting in the formation of AMP, that is energically less costly than de novo synthesis. The chain is Adenine phosphoribosyltransferase from Lactiplantibacillus plantarum (strain ATCC BAA-793 / NCIMB 8826 / WCFS1) (Lactobacillus plantarum).